The chain runs to 58 residues: Sec-independent protein translocase protein TatA (58 aa).

A helical transmembrane segment spans residues 1–21; sequence MLSNIGFPGLILILVAILILF.

It belongs to the TatA/E family. Forms a complex with TatC.

It is found in the cell membrane. In terms of biological role, part of the twin-arginine translocation (Tat) system that transports large folded proteins containing a characteristic twin-arginine motif in their signal peptide across membranes. TatA could form the protein-conducting channel of the Tat system. This chain is Sec-independent protein translocase protein TatA, found in Bacillus cytotoxicus (strain DSM 22905 / CIP 110041 / 391-98 / NVH 391-98).